We begin with the raw amino-acid sequence, 119 residues long: Large ribosomal subunit protein bL20 (119 aa).

It belongs to the bacterial ribosomal protein bL20 family. In terms of assembly, part of the 50S ribosomal subunit.

In terms of biological role, binds directly to 23S ribosomal RNA and is necessary for the in vitro assembly process of the 50S ribosomal subunit. It is not involved in the protein synthesizing functions of that subunit. This chain is Large ribosomal subunit protein bL20 (rplT), found in Bacillus subtilis (strain 168).